Here is a 273-residue protein sequence, read N- to C-terminus: Dermonecrotic toxin LruSicTox-alphaIC1c (273 aa).

The active site involves H5. Mg(2+)-binding residues include E25 and D27. The Nucleophile role is filled by H41. Disulfide bonds link C45–C51 and C47–C190. Residue D85 coordinates Mg(2+).

Belongs to the arthropod phospholipase D family. Class II subfamily. Mg(2+) is required as a cofactor. As to expression, expressed by the venom gland.

It is found in the secreted. The enzyme catalyses an N-(acyl)-sphingosylphosphocholine = an N-(acyl)-sphingosyl-1,3-cyclic phosphate + choline. It carries out the reaction an N-(acyl)-sphingosylphosphoethanolamine = an N-(acyl)-sphingosyl-1,3-cyclic phosphate + ethanolamine. The catalysed reaction is a 1-acyl-sn-glycero-3-phosphocholine = a 1-acyl-sn-glycero-2,3-cyclic phosphate + choline. It catalyses the reaction a 1-acyl-sn-glycero-3-phosphoethanolamine = a 1-acyl-sn-glycero-2,3-cyclic phosphate + ethanolamine. Its function is as follows. Dermonecrotic toxins cleave the phosphodiester linkage between the phosphate and headgroup of certain phospholipids (sphingolipid and lysolipid substrates), forming an alcohol (often choline) and a cyclic phosphate. This toxin acts on sphingomyelin (SM). It may also act on ceramide phosphoethanolamine (CPE), lysophosphatidylcholine (LPC) and lysophosphatidylethanolamine (LPE), but not on lysophosphatidylserine (LPS), and lysophosphatidylglycerol (LPG). It acts by transphosphatidylation, releasing exclusively cyclic phosphate products as second products. Induces dermonecrosis, hemolysis, increased vascular permeability, edema, inflammatory response, and platelet aggregation. The sequence is that of Dermonecrotic toxin LruSicTox-alphaIC1c from Loxosceles rufescens (Mediterranean recluse spider).